We begin with the raw amino-acid sequence, 221 residues long: Urease accessory protein UreG (221 aa).

19-26 (GPVGSGKT) is a binding site for GTP.

It belongs to the SIMIBI class G3E GTPase family. UreG subfamily. As to quaternary structure, homodimer. UreD, UreF and UreG form a complex that acts as a GTP-hydrolysis-dependent molecular chaperone, activating the urease apoprotein by helping to assemble the nickel containing metallocenter of UreC. The UreE protein probably delivers the nickel.

It localises to the cytoplasm. Its function is as follows. Facilitates the functional incorporation of the urease nickel metallocenter. This process requires GTP hydrolysis, probably effectuated by UreG. This chain is Urease accessory protein UreG, found in Yersinia enterocolitica serotype O:8 / biotype 1B (strain NCTC 13174 / 8081).